The primary structure comprises 346 residues: Putative glycosyltransferase HI_0523 (346 aa).

Belongs to the glycosyltransferase 9 family.

The polypeptide is Putative glycosyltransferase HI_0523 (Haemophilus influenzae (strain ATCC 51907 / DSM 11121 / KW20 / Rd)).